Consider the following 816-residue polypeptide: Glycerol-3-phosphate acyltransferase (816 aa).

The short motif at 298 to 303 (CHRSHM) is the HXXXXD motif element.

The protein belongs to the GPAT/DAPAT family.

The protein resides in the cell membrane. It carries out the reaction sn-glycerol 3-phosphate + an acyl-CoA = a 1-acyl-sn-glycero-3-phosphate + CoA. It functions in the pathway phospholipid metabolism; CDP-diacylglycerol biosynthesis; CDP-diacylglycerol from sn-glycerol 3-phosphate: step 1/3. The sequence is that of Glycerol-3-phosphate acyltransferase from Hamiltonella defensa subsp. Acyrthosiphon pisum (strain 5AT).